A 312-amino-acid chain; its full sequence is Cell division control protein 2 homolog D (312 aa).

One can recognise a Protein kinase domain in the interval 14 to 304; sequence FVKLEKVGEG…AKKAMEHPYF (291 aa). ATP is bound by residues 20 to 28 and Lys43; that span reads VGEGTYGKV. The residue at position 24 (Thr24) is a Phosphothreonine. A Phosphotyrosine modification is found at Tyr25. Residue Asp145 is the Proton acceptor of the active site. Thr179 is subject to Phosphothreonine; by CAK.

The protein belongs to the protein kinase superfamily. CMGC Ser/Thr protein kinase family. CDC2/CDKX subfamily.

It catalyses the reaction L-seryl-[protein] + ATP = O-phospho-L-seryl-[protein] + ADP + H(+). The catalysed reaction is L-threonyl-[protein] + ATP = O-phospho-L-threonyl-[protein] + ADP + H(+). The enzyme catalyses [DNA-directed RNA polymerase] + ATP = phospho-[DNA-directed RNA polymerase] + ADP + H(+). Its function is as follows. Plays a key role in the control of the eukaryotic cell cycle. The sequence is that of Cell division control protein 2 homolog D (CDC2D) from Antirrhinum majus (Garden snapdragon).